A 63-amino-acid chain; its full sequence is U-reduvitoxin-Pr9a (63 aa).

Residues 1–19 (MRFFSLFTFLVAFIAAALA) form the signal peptide. Positions 20 to 42 (APVEIGEDLFALRPTGAKRDIIL) are excised as a propeptide. A disulfide bridge connects residues Cys47 and Cys60.

In terms of tissue distribution, expressed by the venom gland.

The protein resides in the secreted. This is U-reduvitoxin-Pr9a from Platymeris rhadamanthus (Red spot assassin bug).